The primary structure comprises 185 residues: MTGRLIYLMGPSGSGKDSLLQAAREPLALRGCRIVRRVITRSAEAVGEDAQAVTPAQFDTLERASAFAMSWRANGLCYGIPVQIDEWLAQGYDVLVNGSRGYLAQARRRYPDLLAVLLGVQPEVLRQRLLARGRESPEEIEARLARNAEFAAGLEGPLFQLDNSGELDDTVRALLAWLGGDRACA.

10–17 (GPSGSGKD) lines the ATP pocket.

Belongs to the ribose 1,5-bisphosphokinase family.

It catalyses the reaction alpha-D-ribose 1,5-bisphosphate + ATP = 5-phospho-alpha-D-ribose 1-diphosphate + ADP. It participates in metabolic intermediate biosynthesis; 5-phospho-alpha-D-ribose 1-diphosphate biosynthesis; 5-phospho-alpha-D-ribose 1-diphosphate from D-ribose 5-phosphate (route II): step 3/3. Functionally, catalyzes the phosphorylation of ribose 1,5-bisphosphate to 5-phospho-D-ribosyl alpha-1-diphosphate (PRPP). The sequence is that of Ribose 1,5-bisphosphate phosphokinase PhnN from Pseudomonas paraeruginosa (strain DSM 24068 / PA7) (Pseudomonas aeruginosa (strain PA7)).